A 1136-amino-acid chain; its full sequence is Probable RNA-dependent RNA polymerase 2 (1136 aa).

The tract at residues 965–989 (SGDSGALSSSSAQPSPTYDPDLEVP) is disordered. Residues 967–980 (DSGALSSSSAQPSP) show a composition bias toward low complexity.

This sequence belongs to the RdRP family.

It carries out the reaction RNA(n) + a ribonucleoside 5'-triphosphate = RNA(n+1) + diphosphate. Probably involved in the RNA silencing pathway and required for the generation of small interfering RNAs (siRNAs). The polypeptide is Probable RNA-dependent RNA polymerase 2 (RDR2) (Oryza sativa subsp. japonica (Rice)).